A 459-amino-acid chain; its full sequence is ATP synthase subunit beta (459 aa).

149 to 156 (GGAGVGKT) is a binding site for ATP.

It belongs to the ATPase alpha/beta chains family. In terms of assembly, F-type ATPases have 2 components, CF(1) - the catalytic core - and CF(0) - the membrane proton channel. CF(1) has five subunits: alpha(3), beta(3), gamma(1), delta(1), epsilon(1). CF(0) has three main subunits: a(1), b(2) and c(9-12). The alpha and beta chains form an alternating ring which encloses part of the gamma chain. CF(1) is attached to CF(0) by a central stalk formed by the gamma and epsilon chains, while a peripheral stalk is formed by the delta and b chains.

Its subcellular location is the cell inner membrane. It catalyses the reaction ATP + H2O + 4 H(+)(in) = ADP + phosphate + 5 H(+)(out). In terms of biological role, produces ATP from ADP in the presence of a proton gradient across the membrane. The catalytic sites are hosted primarily by the beta subunits. The sequence is that of ATP synthase subunit beta from Pseudomonas savastanoi pv. phaseolicola (strain 1448A / Race 6) (Pseudomonas syringae pv. phaseolicola (strain 1448A / Race 6)).